The primary structure comprises 129 residues: MPTIQQLIRHGRSVKVSKTASPALEKCPQKRGVCTRVYTTTPKKPNSALRKVARVRLSNKIEVTAYIPGEGHNLQEHSIVLIRGGRVKDLPGVRYHIVRGTLDTSGVSDRKQSRSKYGAKQPKAVAAKK.

The residue at position 89 (D89) is a 3-methylthioaspartic acid. The interval 101–129 (TLDTSGVSDRKQSRSKYGAKQPKAVAAKK) is disordered.

The protein belongs to the universal ribosomal protein uS12 family. As to quaternary structure, part of the 30S ribosomal subunit. Contacts proteins S8 and S17. May interact with IF1 in the 30S initiation complex.

Functionally, with S4 and S5 plays an important role in translational accuracy. In terms of biological role, interacts with and stabilizes bases of the 16S rRNA that are involved in tRNA selection in the A site and with the mRNA backbone. Located at the interface of the 30S and 50S subunits, it traverses the body of the 30S subunit contacting proteins on the other side and probably holding the rRNA structure together. The combined cluster of proteins S8, S12 and S17 appears to hold together the shoulder and platform of the 30S subunit. The sequence is that of Small ribosomal subunit protein uS12 from Chlorobium luteolum (strain DSM 273 / BCRC 81028 / 2530) (Pelodictyon luteolum).